Reading from the N-terminus, the 86-residue chain is Cell division topological specificity factor (86 aa).

The protein belongs to the MinE family.

Functionally, prevents the cell division inhibition by proteins MinC and MinD at internal division sites while permitting inhibition at polar sites. This ensures cell division at the proper site by restricting the formation of a division septum at the midpoint of the long axis of the cell. In Shewanella halifaxensis (strain HAW-EB4), this protein is Cell division topological specificity factor.